The following is a 548-amino-acid chain: Chaperonin GroEL (548 aa).

ATP contacts are provided by residues 29 to 32 (TMGP), Lys-50, 86 to 90 (DGTTT), Gly-414, 478 to 480 (NAA), and Asp-494.

It belongs to the chaperonin (HSP60) family. Forms a cylinder of 14 subunits composed of two heptameric rings stacked back-to-back. Interacts with the co-chaperonin GroES.

The protein resides in the cytoplasm. The enzyme catalyses ATP + H2O + a folded polypeptide = ADP + phosphate + an unfolded polypeptide.. In terms of biological role, together with its co-chaperonin GroES, plays an essential role in assisting protein folding. The GroEL-GroES system forms a nano-cage that allows encapsulation of the non-native substrate proteins and provides a physical environment optimized to promote and accelerate protein folding. Functionally, may play a protective role against the defense mechanisms generated by the infected macrophages. This is Chaperonin GroEL from Legionella pneumophila.